The chain runs to 81 residues: MSHSVKVYDTCIGCTQCVRACPTDVLEMIPWDGCKAKQIASAPRTEDCVGCKRCESACPTDFLSVRVYLGAETTRSMGLAY.

4Fe-4S ferredoxin-type domains lie at 2 to 31 (SHSV…MIPW) and 39 to 68 (IASA…VRVY). Positions 11, 14, 17, 21, 48, 51, 54, and 58 each coordinate [4Fe-4S] cluster.

As to quaternary structure, the eukaryotic PSI reaction center is composed of at least 11 subunits. The cofactor is [4Fe-4S] cluster.

The protein localises to the plastid thylakoid membrane. It catalyses the reaction reduced [plastocyanin] + hnu + oxidized [2Fe-2S]-[ferredoxin] = oxidized [plastocyanin] + reduced [2Fe-2S]-[ferredoxin]. In terms of biological role, apoprotein for the two 4Fe-4S centers FA and FB of photosystem I (PSI); essential for photochemical activity. FB is the terminal electron acceptor of PSI, donating electrons to ferredoxin. The C-terminus interacts with PsaA/B/D and helps assemble the protein into the PSI complex. Required for binding of PsaD and PsaE to PSI. PSI is a plastocyanin-ferredoxin oxidoreductase, converting photonic excitation into a charge separation, which transfers an electron from the donor P700 chlorophyll pair to the spectroscopically characterized acceptors A0, A1, FX, FA and FB in turn. This Cuscuta obtusiflora (Peruvian dodder) protein is Photosystem I iron-sulfur center.